We begin with the raw amino-acid sequence, 3912 residues long: Chondramide synthase cmdD (3912 aa).

One can recognise a Carrier 1 domain in the interval 1411 to 1485 (APRNAREETL…ALAEVASASK (75 aa)). Residue serine 1446 is modified to O-(pantetheine 4'-phosphoryl)serine. Residues 1995–2029 (ADEDDEEDDELDEEFDAEVDEEDEDEEEEEDDDGE) show a composition bias toward acidic residues. Positions 1995–2030 (ADEDDEEDDELDEEFDAEVDEEDEDEEEEEDDDGEN) are disordered. Residues 2989–3064 (APRTATEETL…VLARVIDEAL (76 aa)) form the Carrier 2 domain. Serine 3024 carries the post-translational modification O-(pantetheine 4'-phosphoryl)serine.

Belongs to the ATP-dependent AMP-binding enzyme family. The cofactor is pantetheine 4'-phosphate.

Involved in the synthesis of chondramides. Activates R-beta-tyrosine and probably phenylalanine. This is Chondramide synthase cmdD from Chondromyces crocatus.